Reading from the N-terminus, the 347-residue chain is Large ribosomal subunit protein uL10 (347 aa).

The disordered stretch occupies residues 310 to 347 (ATVAAPAAEEEKKEEEPEEEEEDHAEEDGMAGLGALFG). Positions 325-338 (EPEEEEEDHAEEDG) are enriched in acidic residues.

This sequence belongs to the universal ribosomal protein uL10 family. Part of the 50S ribosomal subunit. Forms part of the ribosomal stalk which helps the ribosome interact with GTP-bound translation factors. Forms a heptameric L10(L12)2(L12)2(L12)2 complex, where L10 forms an elongated spine to which the L12 dimers bind in a sequential fashion.

In terms of biological role, forms part of the ribosomal stalk, playing a central role in the interaction of the ribosome with GTP-bound translation factors. The protein is Large ribosomal subunit protein uL10 of Methanosarcina mazei (strain ATCC BAA-159 / DSM 3647 / Goe1 / Go1 / JCM 11833 / OCM 88) (Methanosarcina frisia).